A 79-amino-acid chain; its full sequence is Acyl carrier protein (79 aa).

In terms of domain architecture, Carrier spans 3–78 (QEILEKVRSI…DAVSYIQEKK (76 aa)). Residue S38 is modified to O-(pantetheine 4'-phosphoryl)serine.

Belongs to the acyl carrier protein (ACP) family. In terms of processing, 4'-phosphopantetheine is transferred from CoA to a specific serine of apo-ACP by AcpS. This modification is essential for activity because fatty acids are bound in thioester linkage to the sulfhydryl of the prosthetic group.

It is found in the cytoplasm. It participates in lipid metabolism; fatty acid biosynthesis. Its function is as follows. Carrier of the growing fatty acid chain in fatty acid biosynthesis. The chain is Acyl carrier protein from Synechococcus sp. (strain RCC307).